We begin with the raw amino-acid sequence, 882 residues long: Translation initiation factor IF-2 (882 aa).

2 disordered regions span residues 95–176 and 229–289; these read PSVT…ASSL and EHAR…SALQ. The span at 116–133 shows a compositional bias: polar residues; the sequence is TKNTFSQESLNKTSPQKS. 2 stretches are compositionally biased toward basic and acidic residues: residues 137–172 and 229–246; these read KAIEKAKIESPKKERHSLKEKQKKEAQSEKARREAE and EHARAAEDENDAKVEGDR. Positions 247–262 are enriched in basic residues; it reads RSRHRGTKTTKQKKTN. Over residues 263–276 the composition is skewed to basic and acidic residues; it reads KLSESKTDREEARA. The 170-residue stretch at 382-551 folds into the tr-type G domain; that stretch reads HRAPVVTIMG…LLQAEVLELK (170 aa). A G1 region spans residues 391-398; that stretch reads GHVDHGKT. Position 391–398 (391–398) interacts with GTP; the sequence is GHVDHGKT. The G2 stretch occupies residues 416-420; that stretch reads GITQH. Residues 437 to 440 are G3; it reads DTPG. GTP is bound by residues 437–441 and 491–494; these read DTPGH and NKID. Positions 491–494 are G4; the sequence is NKID. A G5 region spans residues 527–529; the sequence is SAK.

The protein belongs to the TRAFAC class translation factor GTPase superfamily. Classic translation factor GTPase family. IF-2 subfamily.

It localises to the cytoplasm. In terms of biological role, one of the essential components for the initiation of protein synthesis. Protects formylmethionyl-tRNA from spontaneous hydrolysis and promotes its binding to the 30S ribosomal subunits. Also involved in the hydrolysis of GTP during the formation of the 70S ribosomal complex. The polypeptide is Translation initiation factor IF-2 (Hamiltonella defensa subsp. Acyrthosiphon pisum (strain 5AT)).